The sequence spans 404 residues: Aspergillopepsin-1 (404 aa).

Positions 1–20 are cleaved as a signal peptide; it reads MVILSKVAAVAVGLSTVASA. The propeptide at 21 to 77 is activation peptide; the sequence is LPTGPSHSPHARRGFTINQITRQTARVGPKTASFPAIYSRALAKYGGTVPAHLKSAV. The Peptidase A1 domain occupies 95–401; sequence YLTPVNIGGT…DSQGPRLGFA (307 aa). Asp111 is a catalytic residue. Asn140 is a glycosylation site (N-linked (GlcNAc...) asparagine). Asp293 is a catalytic residue. Residues Cys329 and Cys364 are joined by a disulfide bond.

This sequence belongs to the peptidase A1 family. In terms of assembly, monomer.

It localises to the secreted. The enzyme catalyses Hydrolysis of proteins with broad specificity. Generally favors hydrophobic residues in P1 and P1', but also accepts Lys in P1, which leads to activation of trypsinogen. Does not clot milk.. Its function is as follows. Secreted aspartic endopeptidase that allows assimilation of proteinaceous substrates. The scissile peptide bond is attacked by a nucleophilic water molecule activated by two aspartic residues in the active site. Shows a broad primary substrate specificity. Favors hydrophobic residues at the P1 and P1' positions, but also accepts a lysine residue in the P1 position, leading to the activation of trypsinogen and chymotrypsinogen A. This Aspergillus flavus (strain ATCC 200026 / FGSC A1120 / IAM 13836 / NRRL 3357 / JCM 12722 / SRRC 167) protein is Aspergillopepsin-1 (pepA).